The chain runs to 934 residues: Intimin (934 aa).

An N-terminal signal peptide occupies residues 1-39 (MITHGCYTRTRHKHKLKKTLIMLSAGLGLFFYVNQNSFA). The segment at 40–153 (NGENYFKLGS…KLTKMSPDVT (114 aa)) is peptidoglycan-binding. The segment at 40–153 (NGENYFKLGS…KLTKMSPDVT (114 aa)) is sufficient for homodimerization. The required for periplasmic localization stretch occupies residues 40 to 212 (NGENYFKLGS…LQAWLQHYGT (173 aa)). In terms of domain architecture, LysM spans 63-112 (LFYTLKTGETVADLSKSQDINLSTIWSLNKHLYSSESEMMKAAPGQQIIL). An inverse autotransporter region spans residues 210–411 (YGTAEVNLQS…LYSMQFRYQF (202 aa)). The interval 402 to 411 (LYSMQFRYQF) is signature sequence for beta-barrel assembly machinery (BAM), which recognizes the unfolded beta-barrel in the periplasm. Residues 437-449 (LVQRNNNIILEYK) form a minimum linker residues necessary for formation of a heat-modifiable beta-barrel region. 2 Big-1 domains span residues 560–653 (VTDF…VIFF) and 660–753 (ITEI…VTFF). Positions 747–934 (ATEVTFFDEL…TPNVYAVCVE (188 aa)) are intimin receptor Tir-binding. A BIG2 domain is found at 787–833 (ASGGDGTYSWYSENTSIATVDASGKVTLNGKGSVVIKATSGDKQTVS). Cys-858 and Cys-932 are disulfide-bonded.

This sequence belongs to the intimin/invasin family. Homodimer. Interacts with Tir.

It localises to the cell outer membrane. An inverse autotransporter. Adhesin, which mediates attachment to the human intestine epithelial cells. Necessary for the production of attaching and effacing lesions on infected human tissue culture cells. Anchored to the outer membrane by binding to peptidoglycan (PGN) via its periplasmic domain, thus helping in receptor interactions during host invasion. PGN-binding may also aid in resisting mechanical and chemical stress during transit of the bacterium through the gastrointestinal tract of the host. The chain is Intimin from Escherichia coli O157:H7.